Consider the following 464-residue polypeptide: L-cystine uptake protein TcyP (464 aa).

The next 10 helical transmembrane spans lie at Thr-3–Met-23, Val-34–Pro-54, Tyr-73–Phe-93, Gly-107–Ala-127, Pro-184–Val-204, Ile-225–Met-245, Phe-263–Ala-283, Ala-347–Leu-367, Phe-371–Gly-391, and Phe-395–Ile-415.

The protein belongs to the dicarboxylate/amino acid:cation symporter (DAACS) (TC 2.A.23) family.

Its subcellular location is the membrane. In terms of biological role, mediates uptake of L-cystine, the oxidized form of L-cysteine. The sequence is that of L-cystine uptake protein TcyP from Bacillus thuringiensis (strain Al Hakam).